Consider the following 295-residue polypeptide: 33 kDa chaperonin (295 aa).

Cystine bridges form between Cys237–Cys239 and Cys270–Cys273.

The protein belongs to the HSP33 family. Under oxidizing conditions two disulfide bonds are formed involving the reactive cysteines. Under reducing conditions zinc is bound to the reactive cysteines and the protein is inactive.

It is found in the cytoplasm. Functionally, redox regulated molecular chaperone. Protects both thermally unfolding and oxidatively damaged proteins from irreversible aggregation. Plays an important role in the bacterial defense system toward oxidative stress. In Geobacillus sp. (strain WCH70), this protein is 33 kDa chaperonin.